Reading from the N-terminus, the 586-residue chain is CTP synthase 2 (586 aa).

In terms of domain architecture, Glutamine amidotransferase type-1 spans 300–554 (SIALVGKYTK…LAATGNLNAY (255 aa)). Residues C399, H526, and E528 each act as for GATase activity in the active site. A disordered region spans residues 564 to 586 (SDRYSDASDDSFSEPRLAELEIS). Phosphoserine occurs at positions 568, 571, and 574.

Belongs to the CTP synthase family.

The enzyme catalyses UTP + L-glutamine + ATP + H2O = CTP + L-glutamate + ADP + phosphate + 2 H(+). The protein operates within pyrimidine metabolism; CTP biosynthesis via de novo pathway; CTP from UDP: step 2/2. Catalyzes the ATP-dependent amination of UTP to CTP with either L-glutamine or ammonia as the source of nitrogen. Constitutes the rate-limiting enzyme in the synthesis of cytosine nucleotides. The protein is CTP synthase 2 (CTPS2) of Bos taurus (Bovine).